The following is a 27-amino-acid chain: Toxin Bcg III 21.00 (27 aa).

The protein localises to the secreted. It localises to the nematocyst. Its function is as follows. Possible voltage-gated potassium channel (Kv) blocker. The sequence is that of Toxin Bcg III 21.00 from Bunodosoma cangicum (Sea anemone).